A 209-amino-acid polypeptide reads, in one-letter code: High frequency lysogenization protein HflD homolog (209 aa).

It belongs to the HflD family.

It is found in the cytoplasm. The protein localises to the cell inner membrane. In Sodalis glossinidius (strain morsitans), this protein is High frequency lysogenization protein HflD homolog.